A 218-amino-acid chain; its full sequence is Ropporin-1-like protein (218 aa).

The 38-residue stretch at Pro17–Pro54 folds into the RIIa domain.

This sequence belongs to the ropporin family. As to quaternary structure, component of the axonemal radial spoke complex 1 (RS1), at least composed of spoke head proteins RSPH1, RSPH3, RSPH9 and the cilia-specific component RSPH4A or sperm-specific component RSPH6A, spoke stalk proteins RSPH14, DNAJB13, DYDC1, ROPN1L and NME5, and the anchor protein IQUB. May interact with AKAP3. Interacts with FSCB; the interaction increases upon spermatozoa capacitation conditions. Interacts with CFAP61. Post-translationally, sumoylated, sumoylation decreases upon spermatozoa capacitation conditions. In terms of tissue distribution, testis-specific. Expression is restricted to germ cells.

The protein resides in the cell projection. It localises to the cilium. Its subcellular location is the flagellum. In terms of biological role, functions as part of axonemal radial spoke complexes that play an important part in the motility of sperm and cilia. Important for male fertility. With ROPN1, involved in fibrous sheath integrity and sperm motility, plays a role in PKA-dependent signaling processes required for spermatozoa capacitation. This chain is Ropporin-1-like protein (Ropn1l), found in Mus musculus (Mouse).